A 365-amino-acid polypeptide reads, in one-letter code: Galactoside alpha-(1,2)-fucosyltransferase 1 (365 aa).

Residues 1–8 (MWPLSHRH) are Cytoplasmic-facing. Residues 9–25 (LCLAFLLVCVLSAISFF) traverse the membrane as a helical; Signal-anchor for type II membrane protein segment. Topologically, residues 26 to 365 (LHLYQDSIRH…LSPLWTLAEP (340 aa)) are lumenal. Residues asparagine 65, asparagine 301, and asparagine 327 are each glycosylated (N-linked (GlcNAc...) asparagine).

Belongs to the glycosyltransferase 11 family.

It is found in the golgi apparatus. The protein resides in the golgi stack membrane. It catalyses the reaction a beta-D-galactosyl-(1-&gt;4)-N-acetyl-beta-D-glucosaminyl derivative + GDP-beta-L-fucose = an alpha-L-Fuc-(1-&gt;2)-beta-D-Gal-(1-&gt;4)-beta-D-GlcNAc derivative + GDP + H(+). It carries out the reaction a ganglioside GA1 + GDP-beta-L-fucose = a ganglioside Fuc-GA1 + GDP + H(+). The enzyme catalyses a beta-D-Gal-(1-&gt;3)-beta-D-GlcNAc-(1-&gt;3)-beta-D-Gal-(1-&gt;4)-beta-D-Glc-(1&lt;-&gt;1')-Cer(d18:1(4E)) + GDP-beta-L-fucose = alpha-L-fucosyl-(1-&gt;2)- beta-D-galactosyl-(1-&gt;3)-N-acetyl-beta-D-glucosaminyl-(1-&gt;3)-beta-D-galactosyl-(1-&gt;4)-beta-D-glucosyl-(1&lt;-&gt;1')-N-acylsphing-4-enine + GDP + H(+). The catalysed reaction is a neolactoside nLc4Cer(d18:1(4E)) + GDP-beta-L-fucose = a neolactoside IV(2)-alpha-Fuc-nLc4Cer(d18:1(4E)) + GDP + H(+). It catalyses the reaction a ganglioside GM1 + GDP-beta-L-fucose = a ganglioside Fuc-GM1 + GDP + H(+). It carries out the reaction beta-D-galactosyl-(1-&gt;3)-N-acetyl-D-galactosamine + GDP-beta-L-fucose = alpha-L-fucosyl-(1-&gt;2)-beta-D-galactosyl-(1-&gt;3)-N-acetyl-D-galactosamine + GDP + H(+). Its pathway is protein modification; protein glycosylation. Catalyzes the transfer of L-fucose, from a guanosine diphosphate-beta-L-fucose, to the terminal galactose residue of glycoconjugates through an alpha(1,2) linkage leading to H antigen synthesis that is an intermediate substrate in the synthesis of ABO blood group antigens. H antigen is essential for maturation of the glomerular layer of the main olfactory bulb, in cell migration and early cell-cell contacts during tumor associated angiogenesis. Preferentially fucosylates soluble lactose and to a lesser extent fucosylates glycolipids gangliosides GA1 and GM1a. This Leontopithecus chrysomelas (Golden-headed lion tamarin) protein is Galactoside alpha-(1,2)-fucosyltransferase 1.